Reading from the N-terminus, the 54-residue chain is Snake venom 5'-nucleotidase (54 aa).

Zn(2+) is bound by residues Asp11 and His13. A glycan (N-linked (GlcNAc...) asparagine) is linked at Asn46.

The protein belongs to the 5'-nucleotidase family. Zn(2+) is required as a cofactor. Venom 5'-nucleotidases (or a part thereof) may be released into the venom via exosome-like vesicles. They may be attached via a GPI anchor to the membrane of these vesicles. Soluble forms of 5'-nucleotidase might be released by cleavage of the ectodomain in the exosome-like vesicles or venom gland cells. As to expression, expressed by the venom gland.

Its subcellular location is the membrane. It catalyses the reaction a ribonucleoside 5'-phosphate + H2O = a ribonucleoside + phosphate. Hydrolyzes nucleotides into nucleosides. Snake venom 5'-nucleotidases are widely distributed among venomous snake taxa, but there is a lack of information about their biological activities. They have been shown to inhibit platelet aggregation. This effect may be due to the liberation of inhibitory AMP or adenosine by its action on ADP released upon initiation of aggregation. Venom 5'-nucleotidases are also known to synergistically act in vivo with other toxins like ADPases, phospholipases, and disintegrins to exert a more pronounced anti-coagulant effect. The polypeptide is Snake venom 5'-nucleotidase (Gloydius blomhoffii blomhoffii (Japanese mamushi)).